Here is a 294-residue protein sequence, read N- to C-terminus: Protease HtpX (294 aa).

Transmembrane regions (helical) follow at residues 4-24 (ILLF…ILFI) and 33-53 (FGLI…SLLL). Histidine 139 is a Zn(2+) binding site. Residue glutamate 140 is part of the active site. Histidine 143 lines the Zn(2+) pocket. 2 consecutive transmembrane segments (helical) span residues 147-167 (GDMI…IFLS) and 197-217 (FFIS…ITFW). Glutamate 223 serves as a coordination point for Zn(2+).

It belongs to the peptidase M48B family. Zn(2+) is required as a cofactor.

The protein resides in the cell membrane. This Wigglesworthia glossinidia brevipalpis protein is Protease HtpX.